A 566-amino-acid polypeptide reads, in one-letter code: Peroxisomal leader peptide-processing protease (566 aa).

The tract at residues 319–531 (ALAALLPPEV…LQPALQQYSQ (213 aa)) is serine protease. Residues H372, D408, and S481 each act as charge relay system in the active site.

Belongs to the peptidase S1B family. In terms of assembly, homodimer. Forms a heterodimer with the C-terminal cleavage product (45 kDa form). Forms a heterodimer with the N-terminal cleavage product (15 kDa form). Interacts with PEX5. Interacts with LONP2. Post-translationally, self-cleavage gives rise to an N-terminal 15-kDa fragment and C-terminal 45-kDa fragment upon import into the peroxisomes. The full-lengh TYSND1 is the active the proteolytic processing of PTS1- and PTS2-proteins and in self-cleavage, and intermolecular self-cleavage of TYSND1 down-regulates its protease activity.

The protein localises to the peroxisome. In terms of biological role, peroxisomal protease that mediates both the removal of the leader peptide from proteins containing a PTS2 target sequence and processes several PTS1-containing proteins. Catalyzes the processing of PTS1-proteins involved in the peroxisomal beta-oxidation of fatty acids. The protein is Peroxisomal leader peptide-processing protease (TYSND1) of Homo sapiens (Human).